Consider the following 151-residue polypeptide: Large ribosomal subunit protein bL9 (151 aa).

This sequence belongs to the bacterial ribosomal protein bL9 family.

In terms of biological role, binds to the 23S rRNA. The sequence is that of Large ribosomal subunit protein bL9 from Acidobacterium capsulatum (strain ATCC 51196 / DSM 11244 / BCRC 80197 / JCM 7670 / NBRC 15755 / NCIMB 13165 / 161).